We begin with the raw amino-acid sequence, 111 residues long: Large ribosomal subunit protein uL22 (111 aa).

It belongs to the universal ribosomal protein uL22 family. In terms of assembly, part of the 50S ribosomal subunit.

In terms of biological role, this protein binds specifically to 23S rRNA; its binding is stimulated by other ribosomal proteins, e.g. L4, L17, and L20. It is important during the early stages of 50S assembly. It makes multiple contacts with different domains of the 23S rRNA in the assembled 50S subunit and ribosome. The globular domain of the protein is located near the polypeptide exit tunnel on the outside of the subunit, while an extended beta-hairpin is found that lines the wall of the exit tunnel in the center of the 70S ribosome. This Francisella philomiragia subsp. philomiragia (strain ATCC 25017 / CCUG 19701 / FSC 153 / O#319-036) protein is Large ribosomal subunit protein uL22.